The chain runs to 189 residues: Apolipoprotein D (189 aa).

Positions 1 to 20 (MVMLLLLLSALAGLFGAAEG) are cleaved as a signal peptide. Residue glutamine 21 is modified to Pyrrolidone carboxylic acid. Cystine bridges form between cysteine 28-cysteine 134 and cysteine 61-cysteine 185. Asparagine 65 and asparagine 98 each carry an N-linked (GlcNAc...) asparagine glycan.

Belongs to the calycin superfamily. Lipocalin family. In terms of assembly, homodimer.

The protein resides in the secreted. APOD occurs in the macromolecular complex with lecithin-cholesterol acyltransferase. It is probably involved in the transport and binding of bilin. Appears to be able to transport a variety of ligands in a number of different contexts. This chain is Apolipoprotein D (APOD), found in Macaca fascicularis (Crab-eating macaque).